Here is a 193-residue protein sequence, read N- to C-terminus: Glycerol-3-phosphate acyltransferase (193 aa).

5 consecutive transmembrane segments (helical) span residues 4–24 (LALI…AVLI), 56–76 (GLVL…GYFL), 80–100 (PLLL…PLFF), 116–136 (APIG…IVLI), and 152–174 (PLFT…CLIV).

The protein belongs to the PlsY family. As to quaternary structure, probably interacts with PlsX.

It is found in the cell inner membrane. The enzyme catalyses an acyl phosphate + sn-glycerol 3-phosphate = a 1-acyl-sn-glycero-3-phosphate + phosphate. Its pathway is lipid metabolism; phospholipid metabolism. In terms of biological role, catalyzes the transfer of an acyl group from acyl-phosphate (acyl-PO(4)) to glycerol-3-phosphate (G3P) to form lysophosphatidic acid (LPA). This enzyme utilizes acyl-phosphate as fatty acyl donor, but not acyl-CoA or acyl-ACP. This chain is Glycerol-3-phosphate acyltransferase, found in Aliivibrio salmonicida (strain LFI1238) (Vibrio salmonicida (strain LFI1238)).